Reading from the N-terminus, the 157-residue chain is MFDILMYLFENYVHSEVEFLVDEDELTQELTRAGFHQSEIIKALSWLENLAELQEGDKPYLCNHAQHSFRIYTQDEMDKLDVECRGFILFLEQIEVLNVVTREMVIDRIMELDESALILEDLKWVVLMVLFNAPGNESAYEQMEDLIFEQPDGRLHS.

The protein belongs to the Smg family.

This chain is Protein Smg homolog, found in Shewanella woodyi (strain ATCC 51908 / MS32).